The following is a 620-amino-acid chain: Chaperone protein HscA homolog (620 aa).

It belongs to the heat shock protein 70 family.

Functionally, chaperone involved in the maturation of iron-sulfur cluster-containing proteins. Has a low intrinsic ATPase activity which is markedly stimulated by HscB. The chain is Chaperone protein HscA homolog from Shewanella sp. (strain MR-4).